A 729-amino-acid polypeptide reads, in one-letter code: uncharacterized protein (729 aa).

This sequence belongs to the mimivirus L515/L516 family.

The protein resides in the virion. This is an uncharacterized protein from Acanthamoeba polyphaga mimivirus (APMV).